The sequence spans 185 residues: Der GTPase-activating protein YihI (185 aa).

Disordered stretches follow at residues 1–74 (MGRS…KKKI) and 145–169 (EPEDDEEEIFEEAPVASKKKASSDE). Positions 23 to 33 (NRSESDVEGRE) are enriched in basic and acidic residues. Over residues 34–47 (RKRVKKRKGLKSGS) the composition is skewed to basic residues. Residues 48-68 (RHSDGSEAKQRKAALARDPRL) are compositionally biased toward basic and acidic residues. The span at 145-155 (EPEDDEEEIFE) shows a compositional bias: acidic residues.

It belongs to the YihI family. As to quaternary structure, interacts with Der.

In terms of biological role, a GTPase-activating protein (GAP) that modifies Der/EngA GTPase function. May play a role in ribosome biogenesis. The protein is Der GTPase-activating protein YihI of Vibrio atlanticus (strain LGP32) (Vibrio splendidus (strain Mel32)).